The sequence spans 291 residues: UPF0173 metal-dependent hydrolase Rmet_5695 (291 aa).

The protein belongs to the UPF0173 family.

This is UPF0173 metal-dependent hydrolase Rmet_5695 from Cupriavidus metallidurans (strain ATCC 43123 / DSM 2839 / NBRC 102507 / CH34) (Ralstonia metallidurans).